The primary structure comprises 209 residues: Orotate phosphoribosyltransferase (209 aa).

5-phospho-alpha-D-ribose 1-diphosphate contacts are provided by residues Arg-96, Lys-100, His-102, and 122–130 (EDLISTGGS). Ser-126 lines the orotate pocket.

This sequence belongs to the purine/pyrimidine phosphoribosyltransferase family. PyrE subfamily. Homodimer. The cofactor is Mg(2+).

It carries out the reaction orotidine 5'-phosphate + diphosphate = orotate + 5-phospho-alpha-D-ribose 1-diphosphate. Its pathway is pyrimidine metabolism; UMP biosynthesis via de novo pathway; UMP from orotate: step 1/2. Its function is as follows. Catalyzes the transfer of a ribosyl phosphate group from 5-phosphoribose 1-diphosphate to orotate, leading to the formation of orotidine monophosphate (OMP). The sequence is that of Orotate phosphoribosyltransferase from Lactococcus lactis subsp. cremoris (strain MG1363).